The chain runs to 277 residues: Digeranylgeranylglyceryl phosphate synthase (277 aa).

7 helical membrane-spanning segments follow: residues 13-33 (PGNA…AGGL), 40-60 (AFAV…NDYF), 89-109 (VALF…AIAI), 143-163 (FLYG…LFAL), 199-219 (RSLY…PLPY), 220-240 (LLGL…CGLA), and 256-276 (WLKA…LAVV).

The protein belongs to the UbiA prenyltransferase family. DGGGP synthase subfamily. It depends on Mg(2+) as a cofactor.

It is found in the cell membrane. It catalyses the reaction sn-3-O-(geranylgeranyl)glycerol 1-phosphate + (2E,6E,10E)-geranylgeranyl diphosphate = 2,3-bis-O-(geranylgeranyl)-sn-glycerol 1-phosphate + diphosphate. Its pathway is membrane lipid metabolism; glycerophospholipid metabolism. Functionally, prenyltransferase that catalyzes the transfer of the geranylgeranyl moiety of geranylgeranyl diphosphate (GGPP) to the C2 hydroxyl of (S)-3-O-geranylgeranylglyceryl phosphate (GGGP). This reaction is the second ether-bond-formation step in the biosynthesis of archaeal membrane lipids. This Natronomonas pharaonis (strain ATCC 35678 / DSM 2160 / CIP 103997 / JCM 8858 / NBRC 14720 / NCIMB 2260 / Gabara) (Halobacterium pharaonis) protein is Digeranylgeranylglyceryl phosphate synthase.